Consider the following 263-residue polypeptide: Endonuclease 8 (263 aa).

The Schiff-base intermediate with DNA role is filled by Pro2. The active-site Proton donor is Glu3. The active-site Proton donor; for beta-elimination activity is the Lys53. 3 residues coordinate DNA: Gln70, Arg125, and Asn169. The FPG-type zinc finger occupies 229–263; that stretch reads KVFHRDGEPCERCGGIIEKTTLSSRPFYWCPGCQH. Arg253 (proton donor; for delta-elimination activity) is an active-site residue.

The protein belongs to the FPG family. Requires Zn(2+) as cofactor.

The enzyme catalyses 2'-deoxyribonucleotide-(2'-deoxyribose 5'-phosphate)-2'-deoxyribonucleotide-DNA = a 3'-end 2'-deoxyribonucleotide-(2,3-dehydro-2,3-deoxyribose 5'-phosphate)-DNA + a 5'-end 5'-phospho-2'-deoxyribonucleoside-DNA + H(+). Its function is as follows. Involved in base excision repair of DNA damaged by oxidation or by mutagenic agents. Acts as a DNA glycosylase that recognizes and removes damaged bases. Has a preference for oxidized pyrimidines, such as thymine glycol, 5,6-dihydrouracil and 5,6-dihydrothymine. Has AP (apurinic/apyrimidinic) lyase activity and introduces nicks in the DNA strand. Cleaves the DNA backbone by beta-delta elimination to generate a single-strand break at the site of the removed base with both 3'- and 5'-phosphates. This Escherichia coli (strain UTI89 / UPEC) protein is Endonuclease 8.